Here is a 266-residue protein sequence, read N- to C-terminus: Thiazole synthase (266 aa).

The active-site Schiff-base intermediate with DXP is K107. 1-deoxy-D-xylulose 5-phosphate is bound by residues G168, 194–195 (AG), and 216–217 (NT).

It belongs to the ThiG family. Homotetramer. Forms heterodimers with either ThiH or ThiS.

Its subcellular location is the cytoplasm. The catalysed reaction is [ThiS sulfur-carrier protein]-C-terminal-Gly-aminoethanethioate + 2-iminoacetate + 1-deoxy-D-xylulose 5-phosphate = [ThiS sulfur-carrier protein]-C-terminal Gly-Gly + 2-[(2R,5Z)-2-carboxy-4-methylthiazol-5(2H)-ylidene]ethyl phosphate + 2 H2O + H(+). It participates in cofactor biosynthesis; thiamine diphosphate biosynthesis. Its function is as follows. Catalyzes the rearrangement of 1-deoxy-D-xylulose 5-phosphate (DXP) to produce the thiazole phosphate moiety of thiamine. Sulfur is provided by the thiocarboxylate moiety of the carrier protein ThiS. In vitro, sulfur can be provided by H(2)S. The polypeptide is Thiazole synthase (Azorhizobium caulinodans (strain ATCC 43989 / DSM 5975 / JCM 20966 / LMG 6465 / NBRC 14845 / NCIMB 13405 / ORS 571)).